Consider the following 396-residue polypeptide: NADH-quinone oxidoreductase subunit D 1 (396 aa).

This sequence belongs to the complex I 49 kDa subunit family. NDH-1 is composed of 14 different subunits. Subunits NuoB, C, D, E, F, and G constitute the peripheral sector of the complex.

It is found in the cell inner membrane. The enzyme catalyses a quinone + NADH + 5 H(+)(in) = a quinol + NAD(+) + 4 H(+)(out). Functionally, NDH-1 shuttles electrons from NADH, via FMN and iron-sulfur (Fe-S) centers, to quinones in the respiratory chain. The immediate electron acceptor for the enzyme in this species is believed to be ubiquinone. Couples the redox reaction to proton translocation (for every two electrons transferred, four hydrogen ions are translocated across the cytoplasmic membrane), and thus conserves the redox energy in a proton gradient. In Sinorhizobium medicae (strain WSM419) (Ensifer medicae), this protein is NADH-quinone oxidoreductase subunit D 1.